A 245-amino-acid polypeptide reads, in one-letter code: Fibroblast growth factor-binding protein 3 (245 aa).

Residues 1–28 (MSPPRPRASLSPLTLLLLLGGCLLSAAG) form the signal peptide. The interval 33–52 (AAGREVTRASRPTVGSSGRF) is disordered. 2 disulfides stabilise this stretch: cysteine 60–cysteine 81 and cysteine 91–cysteine 125. Residues 136-216 (CARKTAGSDL…PAAAGFQPNG (81 aa)) form a disordered region. Low complexity predominate over residues 170-180 (RSRQSVRSPSS). A disulfide bond links cysteine 228 and cysteine 236.

This sequence belongs to the fibroblast growth factor-binding protein family. As to quaternary structure, interacts with FGF2. In terms of tissue distribution, in the adult, highly expressed in brain with lower levels in ovary. In the embryo, highest levels are found in the brain and spinal cord at 14 dpc and expression is almost completely restricted to the brain by 18 dpc. In the adult and postnatal brain, highly expressed in the orbitofrontal cortex where it is concentrated primarily in differentiated neurons.

It localises to the secreted. Functionally, heparin-binding protein which binds to FGF2, prevents binding of FGF2 to heparin and probably inhibits immobilization of FGF2 on extracellular matrix glycosaminoglycans, allowing its release and subsequent activation of FGFR signaling which leads to increased vascular permeability. The chain is Fibroblast growth factor-binding protein 3 (Fgfbp3) from Mus musculus (Mouse).